We begin with the raw amino-acid sequence, 615 residues long: MFS-type transporter 1 (615 aa).

Residues 1 to 85 form a disordered region; sequence MTALAAVPDL…GNNVSPHGRH (85 aa). Positions 16-53 are enriched in polar residues; sequence PSTTTVHSPNYSGSPADISSSPTTRAVSRNTARQTASA. N-linked (GlcNAc...) asparagine glycosylation occurs at Asn25. The next 6 helical transmembrane spans lie at 94–114, 138–158, 162–182, 192–212, 222–242, and 251–271; these read CLVIATLSGVSFLNTMGSGIL, VYSLAAGCTLLVFGAVGHIIG, VWITGACLYAAFTLGVGRSAT, VLGVSIAMCLPTAVSLTTNGF, FAFQGMGQPLGYSTGLILGGI, and FGFYISGGINAVLAICALVVL. A glycan (N-linked (GlcNAc...) asparagine) is linked at Asn302. The next 8 helical transmembrane spans lie at 320-340, 351-371, 397-417, 432-452, 455-475, 488-508, 522-542, and 585-605; these read WTGTLAISASMGFLSYVFSVV, QNIALLVAAALLLPTFTLWVG, AAVFFTWAVFNAFQYFSALYF, FLPMVLVGAATNIVTGYLVET, VRWLVVVSAIFSLFSPLIMAL, FAMLLSPLHPDVLFTVSNLII, AVFNAVSQVGNSVGLGLTAVV, and AAFWLMFGAAALVTVITFLGL.

Belongs to the major facilitator superfamily. EmrB family.

The protein resides in the membrane. Functionally, MFS-type transporter; part of the gene cluster that mediates the biosynthesis of pyriculol and pyriculariol, two heptaketides that induce lesion formation upon application on rice leaves but are dispensable for pathogenicity. With the ABC transporter ABC7, is most likely responsible for pyriculol and pyriculariol secretion and thereby may contribute to intrinsic resistance. This Pyricularia oryzae (strain 70-15 / ATCC MYA-4617 / FGSC 8958) (Rice blast fungus) protein is MFS-type transporter 1.